The primary structure comprises 90 residues: YcgL domain-containing protein YpsIP31758_2009 (90 aa).

Positions 1–85 (MLCAIYRSPK…PPESLLKMHL (85 aa)) constitute a YcgL domain.

The polypeptide is YcgL domain-containing protein YpsIP31758_2009 (Yersinia pseudotuberculosis serotype O:1b (strain IP 31758)).